Consider the following 81-residue polypeptide: Conotoxin Im6.1 (81 aa).

Residues Met-1–Pro-20 form the signal peptide. A propeptide spanning residues Glu-21–Arg-47 is cleaved from the precursor. 3 disulfides stabilise this stretch: Cys-49–Cys-61, Cys-54–Cys-67, and Cys-60–Cys-76.

Belongs to the conotoxin M superfamily. As to expression, expressed by the venom duct.

It localises to the secreted. In Conus imperialis (Imperial cone), this protein is Conotoxin Im6.1.